Consider the following 206-residue polypeptide: Ribosomal RNA large subunit methyltransferase E (206 aa).

5 residues coordinate S-adenosyl-L-methionine: Gly60, Trp62, Asp80, Asn96, and Asp121. Catalysis depends on Lys161, which acts as the Proton acceptor.

This sequence belongs to the class I-like SAM-binding methyltransferase superfamily. RNA methyltransferase RlmE family.

The protein localises to the cytoplasm. It catalyses the reaction uridine(2552) in 23S rRNA + S-adenosyl-L-methionine = 2'-O-methyluridine(2552) in 23S rRNA + S-adenosyl-L-homocysteine + H(+). In terms of biological role, specifically methylates the uridine in position 2552 of 23S rRNA at the 2'-O position of the ribose in the fully assembled 50S ribosomal subunit. In Francisella philomiragia subsp. philomiragia (strain ATCC 25017 / CCUG 19701 / FSC 153 / O#319-036), this protein is Ribosomal RNA large subunit methyltransferase E.